Consider the following 82-residue polypeptide: ATP synthase subunit c, chloroplastic (82 aa).

A run of 2 helical transmembrane segments spans residues 3–23 (PIIS…AAIG) and 57–77 (LAFM…LLFA).

It belongs to the ATPase C chain family. F-type ATPases have 2 components, F(1) - the catalytic core - and F(0) - the membrane proton channel. F(1) has five subunits: alpha(3), beta(3), gamma(1), delta(1), epsilon(1). F(0) has four main subunits: a(1), b(1), b'(1) and c(10-14). The alpha and beta chains form an alternating ring which encloses part of the gamma chain. F(1) is attached to F(0) by a central stalk formed by the gamma and epsilon chains, while a peripheral stalk is formed by the delta, b and b' chains.

Its subcellular location is the plastid. It is found in the chloroplast thylakoid membrane. In terms of biological role, f(1)F(0) ATP synthase produces ATP from ADP in the presence of a proton or sodium gradient. F-type ATPases consist of two structural domains, F(1) containing the extramembraneous catalytic core and F(0) containing the membrane proton channel, linked together by a central stalk and a peripheral stalk. During catalysis, ATP synthesis in the catalytic domain of F(1) is coupled via a rotary mechanism of the central stalk subunits to proton translocation. Functionally, key component of the F(0) channel; it plays a direct role in translocation across the membrane. A homomeric c-ring of between 10-14 subunits forms the central stalk rotor element with the F(1) delta and epsilon subunits. In Cyanidium caldarium (Red alga), this protein is ATP synthase subunit c, chloroplastic.